Consider the following 409-residue polypeptide: FADH(2)-dependent resorcinol hydroxylase, oxygenase component (409 aa).

The protein belongs to the HpaH/HsaA monooxygenase family. In terms of assembly, the FADH(2)-dependent resorcinol hydroxylase is composed of two subunits, GraA (the oxygenase component) and GraD (the reductase component). Both subunits are required for activity.

It carries out the reaction resorcinol + FADH2 + O2 = benzene-1,2,4-triol + FAD + H2O + H(+). Its pathway is aromatic compound metabolism. Involved in the gamma-resorcylate (2,6-dihydroxybenzoate) catabolism. Oxygenase component of the resorcinol hydroxylase, which catalyzes the FADH(2)-dependent conversion of resorcinol to hydroxyquinol. The chain is FADH(2)-dependent resorcinol hydroxylase, oxygenase component from Rhizobium sp. (strain MTP-10005).